Consider the following 331-residue polypeptide: Mitochondrial carrier protein CoAc1 (331 aa).

6 helical membrane passes run 16-36 (LVDT…AGAI), 79-99 (FYKG…LHYM), 123-143 (LVAG…LDLA), 193-213 (GIGP…YIYE), 231-251 (LPCG…LDVV), and 292-312 (FAGL…GFTV). 3 Solcar repeats span residues 21–107 (PVLA…YRDW), 117–218 (SGPI…LKRH), and 225–319 (NSVR…MKSW).

It belongs to the mitochondrial carrier (TC 2.A.29) family. Expressed throughout the plant.

The protein localises to the mitochondrion inner membrane. Functionally, required for the accumulation of coenzyme A in the mitochondrial matrix. The protein is Mitochondrial carrier protein CoAc1 of Arabidopsis thaliana (Mouse-ear cress).